Here is a 651-residue protein sequence, read N- to C-terminus: Protein SCARECROW 1 (651 aa).

Disordered regions lie at residues 1–33 (MGSSSLLLFPSSSSSATHSSYSPSSSSHAITSL) and 188–277 (SDPA…KQRD). The span at 190–228 (PAPPPPPPPSHPALLPPDATAPPPPPTSVAALPPPPPPQ) shows a compositional bias: pro residues. Positions 253 to 280 (TAEETAAAAAAAKERKEEQRRKQRDEEG) form a coiled coil. Low complexity predominate over residues 254 to 263 (AEETAAAAAA). Over residues 264–277 (AKERKEEQRRKQRD) the composition is skewed to basic and acidic residues. Residues 274 to 644 (KQRDEEGLHL…LCLLTASAWR (371 aa)) enclose the GRAS domain. Positions 281–345 (LHLLTLLLQC…VSSCLGLYAP (65 aa)) are leucine repeat I (LRI). The LxCxE motif motif lies at 288 to 292 (LQCAE). Residues 364–429 (FQVFNGISPF…GGPPRVRLTG (66 aa)) form a VHIID region. The short motif at 395–399 (VHIID) is the VHIID element. The leucine repeat II (LRII) stretch occupies residues 439-471 (ATGKRLSDFADTLGLPFEFCPVADKAGNLDPEK). The PFYRE stretch occupies residues 480 to 567 (VAVHWLRHSL…QQLLSREIRN (88 aa)). Residues 570–644 (AVGGPARTGD…LCLLTASAWR (75 aa)) are SAW.

The protein belongs to the GRAS family. Interacts with SHR1, but not with SHR2. In terms of tissue distribution, expressed in the initial daughter cell before its asymmetric division and remains expressed in the endodermal cell layer after the division.

The protein resides in the nucleus. Its function is as follows. Transcription factor required for quiescent center cells specification and maintenance of surrounding stem cells, and for the asymmetric cell division involved in radial pattern formation in roots. Essential for cell division but not differentiation of the ground tissue. Regulates the radial organization of the shoot axial organs. Restricts SHR movment and sequesters it into the nucleus of the endodermis. The polypeptide is Protein SCARECROW 1 (SCR1) (Oryza sativa subsp. japonica (Rice)).